A 932-amino-acid polypeptide reads, in one-letter code: MGLTPMMKQYLEVKESCKDCILFFRLGDFYEMFFEDAKVASKELELVLTGRDCGLEERAPMCGIPYHAANTYIGRLVSAGYKIAICEQLEDPSASKGIVKRGIIKIITPGTYTDSSFLEENKNNYIMSLYLDDNMCAMSFADISTGEFNSTHSNFKEAVVLDEISKFAPREIVLEENIKESFIHTIKERFPNISISKIKEENFAYNIDNNLKEQFNNFNENEYETIVKKSANGLLYYIFHTQKNILSNINKIDYYSIVDYLTIDVNSRRNLEITENLREKTKKGSLLWVLDKTNTAMGGRQLRRWIEQPLINKNPIENRLNAVEELLNNISLQEDLKEDLKSIYDIERIVGKVASKSVNAKELISLKCSIGKVPYIKKYLSSFKSDLFLNMEKCIDTLEDIHKLLDKALLDNPSLSVKEGNIIKEGFNEEVDSLREAKSNGKKWIASLEQKEKEETGIKSLKVSYNKVFGYFIEITKANLNLVPEGRYIRKQTLSNAERYITPELKEMEEKILGAEEKLIDIEYKLFTKIRDFIEENIDRMQKTARIISDIDCLCSLATVALENNYIKPNINAKDEILIEEGRHPVVEKVIPKGEFISNDSLIDTKENQLILITGPNMAGKSTYMRQVALITIMAQIGSFVPAKKANISICDKIFTRIGASDDLAAGKSTFMVEMWEVSNILKNATSKSLVLLDEVGRGTSTYDGLSIAWSVIEYICNNKNLRCKTLFATHYHELTKLEDNIEGVKNYSVSVSELENEIVFLRKIIRGGADQSYGIEVAKLAGLPSPVINRAKEILQHIEGDKEENSLNITPSKEYKSKDYIEVSKDTLNTKNNLESEIKHDTLSETNTATIIEDESTKEHLSSNKKQINCKRNGEKSIKKEVAVDSFQINFEHIKKDKIIEEIKNIDILNMTPMEGFNKLYDIINKTKDID.

615-622 provides a ligand contact to ATP; sequence GPNMAGKS.

It belongs to the DNA mismatch repair MutS family.

Its function is as follows. This protein is involved in the repair of mismatches in DNA. It is possible that it carries out the mismatch recognition step. This protein has a weak ATPase activity. The sequence is that of DNA mismatch repair protein MutS from Clostridium botulinum (strain 657 / Type Ba4).